Here is a 390-residue protein sequence, read N- to C-terminus: Phosphopentomutase (390 aa).

The Mn(2+) site is built by Asp-10, Asp-284, His-289, Asp-325, His-326, and His-337.

This sequence belongs to the phosphopentomutase family. Requires Mn(2+) as cofactor.

The protein localises to the cytoplasm. The enzyme catalyses 2-deoxy-alpha-D-ribose 1-phosphate = 2-deoxy-D-ribose 5-phosphate. It carries out the reaction alpha-D-ribose 1-phosphate = D-ribose 5-phosphate. It functions in the pathway carbohydrate degradation; 2-deoxy-D-ribose 1-phosphate degradation; D-glyceraldehyde 3-phosphate and acetaldehyde from 2-deoxy-alpha-D-ribose 1-phosphate: step 1/2. Functionally, isomerase that catalyzes the conversion of deoxy-ribose 1-phosphate (dRib-1-P) and ribose 1-phosphate (Rib-1-P) to deoxy-ribose 5-phosphate (dRib-5-P) and ribose 5-phosphate (Rib-5-P), respectively. This Clostridioides difficile (strain 630) (Peptoclostridium difficile) protein is Phosphopentomutase.